The primary structure comprises 793 residues: MADAWEEIRRLAADFQRAQFAEATQRLSERNCIEIVNKLIAQKQLEVVHTLDGKEYITPAQISKEMRDELHVRGGRVNIVDLQQVINVDLIHIENRIGDIIKSEKHVQLVLGQLIDENYLDRLAEEVNDKLQESGQVTISELCKTYDLPGNFLTQALTQRLGRIISGHIDLDNRGVIFTEAFVARHKARIRGLFSAITRPTAVNSLISKYGFQEQLLYSVLEELVNSGRLRGTVVGGRQDKAVFVPDIYSRTQSTWVDSFFRQNGYLEFDALSRLGIPDAVSYIKKRYKTTQLLFLKAACVGQGLVDQVEASVEEAISSGTWVDIAPLLPTSLSVEDAAILLQQVMRAFSKQASAVVFSDTVVVSEKFINDCTELFRELMHQKAEKEMKNNPVHLITEEDLKQISTLESVSTSKKDKKDERRRKATEGSGSVRGGGGGNAREYKIRKVKKKGRKDDDSDDETQSSHTGKKKPEISFMFQDEIEDFLRKHIQDAPEEFISELAEYLIKPLNKTYLEVVRSVFMSSTTSASGTGRKRTIKDLQEEVSNLYNNIRLFEKGMKFFADDTQAALTKHLLKSVCTDITNLIFNFLASDLMMAVDDPAAITSEIRKKILSKLSEETKVALTKLHNSLNEKSIEDFISCLDSAAEACDIMVKRGDKKRERQILFQHRQALAEQLKVTEDPALILHLTSVLLFQFSTHTMLHAPGRCVPQIIAFLNSKIPEDQHALLVKYQGLVVKQLVSQNKKTGQGDYPLNNELGKEQEDVANTRKELQELSSSIKDLVLKSRKSSVTEE.

Alanine 2 bears the N-acetylalanine mark. Residues 2–200 (ADAWEEIRRL…RGLFSAITRP (199 aa)) form a mediates interaction with DDRGK1 region. The interval 2 to 212 (ADAWEEIRRL…VNSLISKYGF (211 aa)) is required for E3 UFM1-protein ligase activity. The tract at residues 121–250 (DRLAEEVNDK…KAVFVPDIYS (130 aa)) is involved in CDK5RAP3-binding. The interval 200 to 400 (PTAVNSLISK…NPVHLITEED (201 aa)) is mediates interaction with TRIP4. The disordered stretch occupies residues 407 to 473 (LESVSTSKKD…SSHTGKKKPE (67 aa)). Arginine 433 carries the omega-N-methylarginine modification. The residue at position 458 (serine 458) is a Phosphoserine. Positions 490–684 (IQDAPEEFIS…QLKVTEDPAL (195 aa)) are mediates interaction with CDK5RAP3. The residue at position 536 (threonine 536) is a Phosphothreonine.

It belongs to the UFL1 family. In terms of assembly, catalytic component of the UFM1 ribosome E3 ligase (UREL) complex, composed of UFL1, DDRGK1 and CDK5RAP3. Interacts with E2-like enzyme UFC1. Interacts with RELA. Interacts with NBN; promoting recruitment to double-strand breaks following DNA damage. Interacts (when phosphorylated) with YWHAG/14-3-3-gamma; sequestering UFL1 and preventing its association with PDCD1/PD-1 substrate. In terms of processing, ubiquitinated, leading to its degradation by the proteasome. Interaction with CDK5RAP3 protects both proteins against ubiquitination and degradation via the proteasome. Phosphorylation at Thr-536 by AMPK promotes its interaction with YWHAG/14-3-3-gamma, thereby preventing UFL1 association with PDCD1/PD-1 substrate.

The protein resides in the endoplasmic reticulum membrane. It is found in the cytoplasm. It localises to the cytosol. The protein localises to the nucleus. Its subcellular location is the chromosome. In terms of biological role, E3 protein ligase that mediates ufmylation, the covalent attachment of the ubiquitin-like modifier UFM1 to lysine residues on target proteins, and which plays a key role in various processes, such as ribosome recycling, response to DNA damage, interferon response or reticulophagy (also called ER-phagy). Catalyzes ufmylation of many protein, such as CD274/PD-L1, CDK5RAP3, CYB5R3, DDRGK1, EIF6, histone H4, MRE11, P4HB, PDCD1/PD-1, TRIP4, RPN1, RPS20/uS10, RPL10/uL16, RPL26/uL24, SYVN1/HRD1 and TP53/p53. As part of the UREL complex, plays a key role in ribosome recycling by catalyzing mono-ufmylation of RPL26/uL24 subunit of the 60S ribosome. Ufmylation of RPL26/uL24 occurs on free 60S ribosomes following ribosome dissociation: it weakens the junction between post-termination 60S subunits and SEC61 translocons, promoting release and recycling of the large ribosomal subunit from the endoplasmic reticulum membrane. Ufmylation of RPL26/uL24 and subsequent 60S ribosome recycling either take place after normal termination of translation or after ribosome stalling during cotranslational translocation at the endoplasmic reticulum. Involved in reticulophagy in response to endoplasmic reticulum stress by mediating ufmylation of proteins such as CYB5R3 and RPN1, thereby promoting lysosomal degradation of ufmylated proteins. Ufmylation in response to endoplasmic reticulum stress is essential for processes such as hematopoiesis, blood vessel morphogenesis or inflammatory response. Mediates ufmylation of DDRGK1 and CDK5RAP3; the role of these modifications is however unclear: as both DDRGK1 and CDK5RAP3 act as substrate adapters for ufmylation, it is uncertain whether ufmylation of these proteins is, a collateral effect or is required for ufmylation. Acts as a negative regulator of T-cell activation by mediating ufmylation and stabilization of PDCD1/PD-1. Also involved in the response to DNA damage: recruited to double-strand break sites following DNA damage and mediates monoufmylation of histone H4 and ufmylation of MRE11. Mediates ufmylation of TP53/p53, promoting its stability. Catalyzes ufmylation of TRIP4, thereby playing a role in nuclear receptor-mediated transcription. Required for hematopoietic stem cell function and hematopoiesis. This is E3 UFM1-protein ligase 1 from Macaca fascicularis (Crab-eating macaque).